A 788-amino-acid chain; its full sequence is Phenylalanine--tRNA ligase beta subunit (788 aa).

Residues 39–147 (FNVSGEIITA…DPVELGVNVV (109 aa)) form the tRNA-binding domain. Residues 399 to 472 (IEPKKVMLRK…RIYGYEKVES (74 aa)) form the B5 domain. 4 residues coordinate Mg(2+): Asp-450, Asp-456, Glu-459, and Glu-460. Positions 694–787 (PRFPAVRRDI…AEREFGIRRR (94 aa)) constitute an FDX-ACB domain.

It belongs to the phenylalanyl-tRNA synthetase beta subunit family. Type 1 subfamily. In terms of assembly, tetramer of two alpha and two beta subunits. Requires Mg(2+) as cofactor.

It is found in the cytoplasm. It carries out the reaction tRNA(Phe) + L-phenylalanine + ATP = L-phenylalanyl-tRNA(Phe) + AMP + diphosphate + H(+). The sequence is that of Phenylalanine--tRNA ligase beta subunit (pheT) from Thermotoga maritima (strain ATCC 43589 / DSM 3109 / JCM 10099 / NBRC 100826 / MSB8).